A 456-amino-acid chain; its full sequence is Aromatic amino acid transport protein AroP (456 aa).

At 1-18 the chain is on the cytoplasmic side; it reads MEGQQHGEQLKRGLKNRH. A helical membrane pass occupies residues 19–39; the sequence is IQLIALGGAIGTGLFLGSASV. Residues 40 to 41 are Periplasmic-facing; sequence IQ. Residues 42–62 form a helical membrane-spanning segment; it reads SAGPGIILGYAIAGFIAFLIM. Topologically, residues 63–85 are cytoplasmic; the sequence is RQLGEMVVEEPVAGSFSHFAYKY. Residues 86-106 form a helical membrane-spanning segment; that stretch reads WGSFAGFASGWNYWVLYVLVA. Over 107-116 the chain is Periplasmic; that stretch reads MAELTAVGKY. Residues 117–137 form a helical membrane-spanning segment; the sequence is IQFWYPEIPTWVSAAVFFVVI. The Cytoplasmic portion of the chain corresponds to 138 to 154; the sequence is NAINLTNVKVFGEMEFW. Residues 155–175 form a helical membrane-spanning segment; that stretch reads FAIIKVIAVVAMIIFGAWLLF. The Periplasmic segment spans residues 176 to 200; the sequence is SGNGGPQASVSNLWDQGGFLPHGFT. A helical transmembrane segment spans residues 201–221; it reads GLVMMMAIIMFSFGGLELVGI. Topologically, residues 222–239 are cytoplasmic; that stretch reads TAAEADNPEQSIPKATNQ. The chain crosses the membrane as a helical span at residues 240–260; sequence VIYRILIFYIGSLAVLLSLMP. Topologically, residues 261-270 are periplasmic; the sequence is WTRVTADTSP. Residues 271–291 form a helical membrane-spanning segment; sequence FVLIFHELGDTFVANALNIVV. Over 292–332 the chain is Cytoplasmic; that stretch reads LTAALSVYNSCVYCNSRMLFGLAQQGNAPKALASVDKRGVP. A helical membrane pass occupies residues 333–353; that stretch reads VNTILVSALVTALCVLINYLA. Residues 354–357 are Periplasmic-facing; that stretch reads PESA. A helical membrane pass occupies residues 358-378; it reads FGLLMALVVSALVINWAMISL. Residues 379-398 are Cytoplasmic-facing; sequence AHMKFRRAKQEQGVVTRFPA. Residues 399–419 form a helical membrane-spanning segment; it reads LLYPLGNWICLLFMAAVLVIM. Residues 420–424 are Periplasmic-facing; the sequence is LMTPG. A helical transmembrane segment spans residues 425–445; the sequence is MAISVYLIPVWLIVLGIGYLF. At 446–456 the chain is on the cytoplasmic side; that stretch reads KEKTAKAVKAH.

It belongs to the amino acid-polyamine-organocation (APC) superfamily. Amino acid transporter (AAT) (TC 2.A.3.1) family.

It localises to the cell inner membrane. It carries out the reaction L-phenylalanine(in) + H(+)(in) = L-phenylalanine(out) + H(+)(out). The enzyme catalyses L-tryptophan(in) + H(+)(in) = L-tryptophan(out) + H(+)(out). The catalysed reaction is L-tyrosine(in) + H(+)(in) = L-tyrosine(out) + H(+)(out). Permease that is involved in the active transport across the cytoplasmic membrane of all three aromatic amino acids, phenylalanine, tyrosine and tryptophan. The polypeptide is Aromatic amino acid transport protein AroP (aroP) (Escherichia coli O6:H1 (strain CFT073 / ATCC 700928 / UPEC)).